The chain runs to 399 residues: Oligoribonuclease NrnB (399 aa).

Requires Mn(2+) as cofactor. It depends on Co(2+) as a cofactor. The cofactor is Mg(2+).

Its subcellular location is the cytoplasm. Degrades RNA oligonucleotides with a length of 5 nucleotides in a 3'- to 5'-direction. Less active on shorter RNA oligonucleotides and on those with a length of 24 nucleotides. Prefers RNA oligonucleotides containing adenines rather than cytosines. The protein is Oligoribonuclease NrnB (nrnB) of Bacillus subtilis (strain 168).